The sequence spans 1476 residues: MNSSSCDRSFGPYAEGCRGGFDFTLLFEESILVVPITALLLLAAPFRATYLLRKHSVKVEHSYWLYCKIILCLLLLASQIAFLVCWTQSPVVTTKASLPAAALSIVASITLLGLSYVEHVYSYRPSTVLNLFLLFSVLFDATRTRTLWLQGYNRPAAITALISTVVKILMLSAETIEKRGFLRPEYRELPSEVTSGVFSHWFFSWQLPLFRVGYSHDLEIESLFPLEKHFKSSYLQTLLQTAWAKAPKKGDYDLLLVVFKTLKRPILFIIFPRLCFIGFTFCQPFLISATLSWAEKDADSNDMNQGYGLIGAWFLVFIGLAVTTGQYQHLTVRATTMVRGQLISMLYDKASDLSITAANPTAALTLMSADIERIDSGWRTAHDVWANLIEIVIAVYLLGRQLGLACLIPVGAAIFSIVGSVIAVSFVMARQAMWLEAIERRISVTSQMLGSMKGVKMCGLSEVLGTRIQAMREEELHISGKFRRLLIWNMVLAYLAPIFAPVLSFMTYSLLAQSQGGRGNLDTNRMFTSLSLFALLQEPLASFVTSLSSFMGSVGSFVRIQAFLKTDARTDDRIIQYNGETEHSLISGVSSSEEKHPVSPIQESMMKTEPSGDSPDGNAFVIRNASFGYDRNETPTLSNIDAIIPSGKLTLVVGPVGSGKSTLMKALLGEVGIMQGSVHASNSTVAYCDQTPWHMNGTVRESIIAFSRPDERWYQKVLEACALKQDLTQLPRGDLSNIGSRGLVLSGGQSQRVSLARAVYAQKSTIILDDVFSGLDAHTENAVFNNLLGSHGILRDLNTTVIVVSSRVKRLPYADHIICLDGTGTGCVQGTFDKLNESDNYVSHSDVSSPDGARSKAPSSGPASSSAPVPESSAAALAELDMELTESKKDGAGRRSGDVAIYMYYMNAIGWIPTMVFVLAICAYIFCQSFPTIWLNWWAAANAKEPFTRLGYYLGVYAMLGALSIIFLVLSTWQMIVTMVPLSGNNFHQSLLKTVLNAPMSFFAATDAGTTINRFSQDLQLIDMDLPLSALNTFATFVLCIAEMILIAVGSYYTAIAFPFLLATLWVVQHTYLRTSRQLRFMDLEAKSPLYALFTETVTGLATLRAFGWRDALEKKHHELLDRSQRPFYLLYAVQRWLTLVLDMIVTIIAVLVVVLVTQLRGKLPAGLIGVALVNIIQFSQHLKLLMTFWTTLETHIGAISRIKSFTSDTASEHEPQEKEQPPSVWPSKGTILFDQVSAGYKESEDVLKNISLNIEAGQKVGICGRTGSGKSSMVSCLFRMIDLHGGRIIVDGLDISTIPREEIRTRLVGVPQDAFLIDGSSVRLNADPAGGLTDAAIEDALRAVELWDIVTDNGGLDTSIEELHLSHGQRQLFCIGRAILRPSPIVVLDEATSSVDSRVDELVQRLVRERFSNRTVISIVHKLQSALDDFDMVVVLDAGKLQEIGHPQELLAKGPDASTFASMYQSVATEKKEDK.

The N-linked (GlcNAc...) asparagine glycan is linked to Asn2. A run of 10 helical transmembrane segments spans residues 23 to 43 (FTLLFEESILVVPITALLLLA), 64 to 84 (WLYCKIILCLLLLASQIAFLV), 97 to 117 (SLPAAALSIVASITLLGLSYV), 156 to 176 (AAITALISTVVKILMLSAETI), 266 to 286 (ILFIIFPRLCFIGFTFCQPFL), 305 to 325 (QGYGLIGAWFLVFIGLAVTTG), 384 to 404 (VWANLIEIVIAVYLLGRQLGL), 407 to 427 (LIPVGAAIFSIVGSVIAVSFV), 485 to 505 (LLIWNMVLAYLAPIFAPVLSF), and 532 to 552 (LFALLQEPLASFVTSLSSFMG). The ABC transmembrane type-1 1 domain maps to 274–552 (LCFIGFTFCQ…FVTSLSSFMG (279 aa)). The interval 586-615 (ISGVSSSEEKHPVSPIQESMMKTEPSGDSP) is disordered. The ABC transporter 1 domain occupies 622 to 847 (IRNASFGYDR…SDNYVSHSDV (226 aa)). Asn624 carries N-linked (GlcNAc...) asparagine glycosylation. 654–661 (GPVGSGKS) serves as a coordination point for ATP. Residues Asn682, Asn696, Asn798, and Asn836 are each glycosylated (N-linked (GlcNAc...) asparagine). The segment at 842-870 (VSHSDVSSPDGARSKAPSSGPASSSAPVP) is disordered. A compositionally biased stretch (low complexity) spans 855–870 (SKAPSSGPASSSAPVP). 6 consecutive transmembrane segments (helical) span residues 906–926 (MNAIGWIPTMVFVLAICAYIF), 950–970 (LGYYLGVYAMLGALSIIFLVL), 1021–1041 (LIDMDLPLSALNTFATFVLCI), 1045–1065 (ILIAVGSYYTAIAFPFLLATL), 1137–1157 (WLTLVLDMIVTIIAVLVVVLV), and 1167–1187 (GLIGVALVNIIQFSQHLKLLM). In terms of domain architecture, ABC transmembrane type-1 2 spans 916-1195 (VFVLAICAYI…LMTFWTTLET (280 aa)). Residues 1232–1464 (ILFDQVSAGY…GPDASTFASM (233 aa)) form the ABC transporter 2 domain. N-linked (GlcNAc...) asparagine glycosylation occurs at Asn1250. 1265 to 1272 (GRTGSGKS) contacts ATP. N-linked (GlcNAc...) asparagine glycosylation occurs at Asn1414.

It belongs to the ABC transporter superfamily. ABCC family. Conjugate transporter (TC 3.A.1.208) subfamily.

Its subcellular location is the cell membrane. Its function is as follows. ABC-type transporter; part of the gene cluster that mediates the biosynthesis of the fusahexin, a cyclic hydrophobic hexapeptide with the amino acid sequence cyclo-(D-Ala-L-Leu-D-allo-Thr-L-Pro-D-Leu-L-Leu) that plays an important role in cell surface hydrophobicity. In Gibberella zeae (strain ATCC MYA-4620 / CBS 123657 / FGSC 9075 / NRRL 31084 / PH-1) (Wheat head blight fungus), this protein is ABC-type transporter FG02316.